Consider the following 254-residue polypeptide: 5'-nucleotidase SurE (254 aa).

The a divalent metal cation site is built by D8, D9, S38, and N91.

Belongs to the SurE nucleotidase family. A divalent metal cation serves as cofactor.

The protein localises to the cytoplasm. It catalyses the reaction a ribonucleoside 5'-phosphate + H2O = a ribonucleoside + phosphate. In terms of biological role, nucleotidase that shows phosphatase activity on nucleoside 5'-monophosphates. This is 5'-nucleotidase SurE from Anaeromyxobacter sp. (strain K).